The primary structure comprises 34 residues: Photosystem II reaction center protein M (34 aa).

The chain crosses the membrane as a helical span at residues 5-25; it reads ILAFIATALFILIPTAFLLII.

Belongs to the PsbM family. As to quaternary structure, PSII is composed of 1 copy each of membrane proteins PsbA, PsbB, PsbC, PsbD, PsbE, PsbF, PsbH, PsbI, PsbJ, PsbK, PsbL, PsbM, PsbT, PsbX, PsbY, PsbZ, Psb30/Ycf12, at least 3 peripheral proteins of the oxygen-evolving complex and a large number of cofactors. It forms dimeric complexes.

Its subcellular location is the plastid. The protein resides in the chloroplast thylakoid membrane. Functionally, one of the components of the core complex of photosystem II (PSII). PSII is a light-driven water:plastoquinone oxidoreductase that uses light energy to abstract electrons from H(2)O, generating O(2) and a proton gradient subsequently used for ATP formation. It consists of a core antenna complex that captures photons, and an electron transfer chain that converts photonic excitation into a charge separation. This subunit is found at the monomer-monomer interface. The polypeptide is Photosystem II reaction center protein M (Lolium perenne (Perennial ryegrass)).